We begin with the raw amino-acid sequence, 286 residues long: MQHPDSILTLLKKSEEFLKKKEIPSARLDAEILLADLLNLQRVKLYVNFERLLNETEKNAYRERILERSKNKPTAYITSQKAFYNSIFFVNENVLIPRPETEELVEKVLSDFKGNIGEQNVLDLCTGSGCIGISLKLARKDWNITLSDISKEALEVATKNAIQILGEEKHIQFLESDLFLSIPKESKFNLIVTNPPYIPISDKAEMMKDVIDYEPHLALFLENPKDFLSTLIAQAYERLVEGGKLYMEILPSLSETIISDSIAKGWENGKIEKDLSGKERFVILTR.

S-adenosyl-L-methionine contacts are provided by Asp-148 and Asn-194. 194 to 197 (NPPY) provides a ligand contact to substrate.

It belongs to the protein N5-glutamine methyltransferase family. PrmC subfamily.

The catalysed reaction is L-glutaminyl-[peptide chain release factor] + S-adenosyl-L-methionine = N(5)-methyl-L-glutaminyl-[peptide chain release factor] + S-adenosyl-L-homocysteine + H(+). Functionally, methylates the class 1 translation termination release factors RF1/PrfA and RF2/PrfB on the glutamine residue of the universally conserved GGQ motif. In Leptospira interrogans serogroup Icterohaemorrhagiae serovar Lai (strain 56601), this protein is Release factor glutamine methyltransferase.